The primary structure comprises 687 residues: Acetolactate synthase catalytic subunit, mitochondrial (687 aa).

Residues 1–90 (MIRQSTLKNF…AEPDMDTSFV (90 aa)) constitute a mitochondrion transit peptide. Over residues 43 to 52 (YYSASPLPAS) the composition is skewed to low complexity. The interval 43–68 (YYSASPLPASKRPEPAPSFNVDPLEQ) is disordered. Glu139 provides a ligand contact to thiamine diphosphate. Residues Arg241, 355-376 (HGCA…VGAR), and 407-426 (EVSP…VEGD) contribute to the FAD site. The tract at residues 499-579 (QHQMWAAQHW…VKILILNNEE (81 aa)) is thiamine pyrophosphate binding. Positions 550, 577, and 579 each coordinate Mg(2+).

It belongs to the TPP enzyme family. In terms of assembly, homodimer. The acetolactate synthase complex contains the catalytic subunit ILV2 and the regulatory small subunit ILV6. The cofactor is Mg(2+). Requires thiamine diphosphate as cofactor.

Its subcellular location is the mitochondrion. It catalyses the reaction 2 pyruvate + H(+) = (2S)-2-acetolactate + CO2. The enzyme catalyses 2-oxobutanoate + pyruvate + H(+) = (S)-2-ethyl-2-hydroxy-3-oxobutanoate + CO2. Its pathway is amino-acid biosynthesis; L-isoleucine biosynthesis; L-isoleucine from 2-oxobutanoate: step 1/4. It participates in amino-acid biosynthesis; L-valine biosynthesis; L-valine from pyruvate: step 1/4. With respect to regulation, the regulatory subunit ILV6 stimulates enzymatic activity seven- to tenfold and confers sensitivity to inhibition by valine and activation by ATP. Functionally, catalytic subunit of mitochondrial acetolactate synthase, which catalyzes the first of a series of common steps in the biosynthesis of the branched-chain amino acids. Catalyzes the irreversible decarboxylation of pyruvate to a bound hydroxyethyl group that then condenses with either a second pyruvate molecule to form 2-acetolactate (AL) or with 2-ketobutyrate to form 2-aceto-2-hydroxybutyrate (AHB). The first product is the precursor for valine and leucine biosynthesis, while the second leads to isoleucine. This is Acetolactate synthase catalytic subunit, mitochondrial (ILV2) from Saccharomyces cerevisiae (strain ATCC 204508 / S288c) (Baker's yeast).